The chain runs to 333 residues: Methenyltetrahydromethanopterin cyclohydrolase (333 aa).

This sequence belongs to the MCH family.

The protein resides in the cytoplasm. It catalyses the reaction 5,10-methenyl-5,6,7,8-tetrahydromethanopterin + H2O = N(5)-formyl-5,6,7,8-tetrahydromethanopterin + H(+). The protein operates within one-carbon metabolism; formaldehyde degradation; formate from formaldehyde (H(4)MPT route): step 3/5. Functionally, catalyzes the hydrolysis of methenyl-H(4)MPT(+) to 5-formyl-H(4)MPT. This is Methenyltetrahydromethanopterin cyclohydrolase (mch) from Rhodopirellula baltica (strain DSM 10527 / NCIMB 13988 / SH1).